Here is a 137-residue protein sequence, read N- to C-terminus: Small ribosomal subunit protein uS9c (137 aa).

It belongs to the universal ribosomal protein uS9 family.

The protein localises to the plastid. It localises to the chloroplast. The sequence is that of Small ribosomal subunit protein uS9c (rps9) from Gracilaria tenuistipitata var. liui (Red alga).